The chain runs to 1516 residues: EF-hand calcium-binding domain-containing protein 6 (1516 aa).

The segment at 1–23 (MKRNGTRLNFAKANSTKSGSTRA) is disordered. A compositionally biased stretch (polar residues) spans 12 to 21 (KANSTKSGST). EF-hand domains follow at residues 96–131 (SRRDDIKKVFQILDRNHNQMVTKGDLKRVITAFLIP), 197–232 (RNMRSIRKVFQVMDVNNTGLVQPQELRRVLETFCLR), 321–356 (KSYEKIEKALSAGDPSKGGYISLNYLKVVLDTFIYR), 444–462 (SGHITWEELRHILNCMVAK), and 528–563 (RNLQAFYSMLQSYDLRDTGTIGKNNFRKVMRVFCPY). D109, N111, N113, M115, D120, D210, N212, T214, and E221 together coordinate Ca(2+). The disordered stretch occupies residues 618–638 (EEPGQQDERTQPSGEKTSEIN). Polar residues predominate over residues 628 to 638 (QPSGEKTSEIN). 6 EF-hand domains span residues 674 to 690 (KINQEEFRKVLERSGMP), 763 to 798 (ESFRDVYSAFFRIDLDRDGIISMHDFHRLLQYLQLN), 905 to 940 (LTPREFEKLWQNYDTEGRGYITYQEFLHRLGIRYSP), 1086 to 1121 (SSQPALVEAFSALDKEDTGFVKAMEFGDVLRSVCQK), 1193 to 1228 (SHYHTIVQEFENFDTLKSNTVSRDEFRSICTRHIQI), and 1229 to 1264 (LTDEQFDRLWSELPVNAKGRLKYQDFLSKLSIERVP). 4 residues coordinate Ca(2+): D776, D778, D780, and D787. At T906 the chain carries Phosphothreonine. The tract at residues 1263–1318 (VPSPPMAAGDSGESTMAQRGSSAPEFSQGTRSNLYSPPRDSRVGLKSRSHPCTPVG) is disordered. A Phosphoserine modification is found at S1265. Polar residues predominate over residues 1274 to 1297 (GESTMAQRGSSAPEFSQGTRSNLY). S1311 is subject to Phosphoserine. Phosphothreonine occurs at positions 1315 and 1319. An interaction with PARK7 region spans residues 1318 to 1516 (GTPPLQNCEP…YNDFLRAFLQ (199 aa)). EF-hand domains are found at residues 1348–1373 (KEKDTDKQGTISAAEFLALVEKFKLD), 1374–1409 (ISREESQQLIVKYDLKNNGKFAYCDFIQSCVLLLKA), 1454–1484 (MRRSFKTYDKNGTGLLSVADFRKVLRQYSIN), and 1485–1516 (LSEEEFFHVLEYYDKSLSSKISYNDFLRAFLQ). An interaction with AR region spans residues 1422–1516 (NADKMKEAGM…YNDFLRAFLQ (95 aa)). Ca(2+) contacts are provided by D1462, N1464, T1466, and D1473.

As to quaternary structure, microtubule inner protein component of sperm flagellar doublet microtubules. Binds PARK7. Part of a ternary complex containing PARK7, EFCAB6/DJBP and AR.

The protein resides in the nucleus. The protein localises to the cytoplasm. It is found in the cytoskeleton. It localises to the flagellum axoneme. Functionally, negatively regulates the androgen receptor by recruiting histone deacetylase complex, and protein DJ-1 antagonizes this inhibition by abrogation of this complex. Microtubule inner protein (MIP) part of the dynein-decorated doublet microtubules (DMTs) in cilia axoneme, which is required for motile cilia beating. In Mus musculus (Mouse), this protein is EF-hand calcium-binding domain-containing protein 6 (Efcab6).